The primary structure comprises 347 residues: Transcription factor JunD (347 aa).

Positions 1 to 43 (METPFYGDEALSGLGGGASGSGGSFASPGRLFPGAPPTAAAGS) are disordered. The segment covering 13-23 (GLGGGASGSGG) has biased composition (gly residues). A Menin-binding motif (MBM) motif is present at residues 27–39 (SPGRLFPGAPPTA). Residues 46–55 (KKDALTLSLS) carry the MAP kinase docking motif; essential for its phosphorylation motif. A disordered region spans residues 62 to 86 (LKPAAAPPPTPLRADGAPSAAPPDG). A compositionally biased stretch (low complexity) spans 73–86 (LRADGAPSAAPPDG). Ser90 bears the Phosphoserine mark. A Phosphoserine; by MAPK8 modification is found at Ser100. Phosphothreonine is present on Thr117. The segment at 244–264 (QTVPDVPSFGESPPLSPIDMD) is disordered. Ser251, Ser255, and Ser259 each carry phosphoserine. Residues 268–295 (RIKAERKRLRNRIAASKCRKRKLERISR) form a basic motif region. One can recognise a bZIP domain in the interval 268–331 (RIKAERKRLR…AQLKQKVLSH (64 aa)). Positions 296-324 (LEEKVKTLKSQNTELASTASLLREQVAQL) are leucine-zipper.

Belongs to the bZIP family. Jun subfamily. As to quaternary structure, heterodimer; binds DNA as a heterodimer. Component of an AP-1 transcription factor complex composed of JUN-FOS heterodimers. As part of the AP-1 transcription factor complex, forms heterodimers with FOS proteins, thereby binding to the AP-1 consensus sequence and stimulating transcription. Forms heterodimers with FOSB; thereby binding to the AP-1 consensus sequence. Interacts (via MBM motif) with MEN1; this interaction represses transcriptional activation. Interacts with MAPK10; this interaction is inhibited in the presence of MEN1. Phosphorylated by MAP kinases MAPK8 and MAPK10; phosphorylation is inhibited in the presence of MEN1.

Its subcellular location is the nucleus. Its function is as follows. Transcription factor binding AP-1 sites. Heterodimerizes with proteins of the FOS family to form an AP-1 transcription factor complex, thereby enhancing their DNA binding activity to an AP-1 consensus sequence 3'-TGA[GC]TCA-5' and enhancing their transcriptional activity. The chain is Transcription factor JunD (JUND) from Homo sapiens (Human).